Reading from the N-terminus, the 599-residue chain is Elongation factor 4 (599 aa).

The tr-type G domain occupies 2–184; it reads KNIRNFSIIA…RLVRDIPPPE (183 aa). GTP contacts are provided by residues 14–19 and 131–134; these read DHGKST and NKID.

It belongs to the TRAFAC class translation factor GTPase superfamily. Classic translation factor GTPase family. LepA subfamily.

The protein localises to the cell inner membrane. The enzyme catalyses GTP + H2O = GDP + phosphate + H(+). Functionally, required for accurate and efficient protein synthesis under certain stress conditions. May act as a fidelity factor of the translation reaction, by catalyzing a one-codon backward translocation of tRNAs on improperly translocated ribosomes. Back-translocation proceeds from a post-translocation (POST) complex to a pre-translocation (PRE) complex, thus giving elongation factor G a second chance to translocate the tRNAs correctly. Binds to ribosomes in a GTP-dependent manner. This Citrobacter koseri (strain ATCC BAA-895 / CDC 4225-83 / SGSC4696) protein is Elongation factor 4.